Consider the following 303-residue polypeptide: Probable porphobilinogen deaminase (303 aa).

Cys233 carries the S-(dipyrrolylmethanemethyl)cysteine modification.

This sequence belongs to the HMBS family. Dipyrromethane serves as cofactor.

The enzyme catalyses 4 porphobilinogen + H2O = hydroxymethylbilane + 4 NH4(+). It functions in the pathway porphyrin-containing compound metabolism; protoporphyrin-IX biosynthesis; coproporphyrinogen-III from 5-aminolevulinate: step 2/4. Tetrapolymerization of the monopyrrole PBG into the hydroxymethylbilane pre-uroporphyrinogen in several discrete steps. The chain is Probable porphobilinogen deaminase from Methanocella arvoryzae (strain DSM 22066 / NBRC 105507 / MRE50).